The sequence spans 843 residues: Protein P (843 aa).

A terminal protein domain (TP) region spans residues 1-177 (MPLSYQHFRK…FCGSPYSWEQ (177 aa)). A spacer region spans residues 178 to 346 (DLQHGRLVFQ…YCLCHIVNLI (169 aa)). Residues 220-265 (QSRLGPQPAQGQLAGRQQGGSGSIRARVHPSPWGTVGVEPSGSGPT) are disordered. The span at 223–235 (LGPQPAQGQLAGR) shows a compositional bias: low complexity. The tract at residues 347-690 (EDWGPCTEHG…YLNLYPVARQ (344 aa)) is polymerase/reverse transcriptase domain (RT). The 244-residue stretch at 357-600 (EHLIRTPRTP…YSLNFMGYVI (244 aa)) folds into the Reverse transcriptase domain. Residues D429, D551, and D552 each contribute to the Mg(2+) site.

It belongs to the hepadnaviridae P protein family.

It carries out the reaction DNA(n) + a 2'-deoxyribonucleoside 5'-triphosphate = DNA(n+1) + diphosphate. It catalyses the reaction Endonucleolytic cleavage to 5'-phosphomonoester.. Its activity is regulated as follows. Activated by host HSP70 and HSP40 in vitro to be able to bind the epsilon loop of the pgRNA. Because deletion of the RNase H region renders the protein partly chaperone-independent, the chaperones may be needed indirectly to relieve occlusion of the RNA-binding site by this domain. Inhibited by several reverse-transcriptase inhibitors: Lamivudine, Adefovir and Entecavir. Multifunctional enzyme that converts the viral RNA genome into dsDNA in viral cytoplasmic capsids. This enzyme displays a DNA polymerase activity that can copy either DNA or RNA templates, and a ribonuclease H (RNase H) activity that cleaves the RNA strand of RNA-DNA heteroduplexes in a partially processive 3'- to 5'-endonucleasic mode. Neo-synthesized pregenomic RNA (pgRNA) are encapsidated together with the P protein, and reverse-transcribed inside the nucleocapsid. Initiation of reverse-transcription occurs first by binding the epsilon loop on the pgRNA genome, and is initiated by protein priming, thereby the 5'-end of (-)DNA is covalently linked to P protein. Partial (+)DNA is synthesized from the (-)DNA template and generates the relaxed circular DNA (RC-DNA) genome. After budding and infection, the RC-DNA migrates in the nucleus, and is converted into a plasmid-like covalently closed circular DNA (cccDNA). The activity of P protein does not seem to be necessary for cccDNA generation, and is presumably released from (+)DNA by host nuclear DNA repair machinery. The sequence is that of Protein P from Hepatitis B virus genotype B2 (isolate Vietnam/9873/1997) (HBV-B).